The chain runs to 303 residues: Glycine--tRNA ligase alpha subunit (303 aa).

Belongs to the class-II aminoacyl-tRNA synthetase family. As to quaternary structure, tetramer of two alpha and two beta subunits.

Its subcellular location is the cytoplasm. The catalysed reaction is tRNA(Gly) + glycine + ATP = glycyl-tRNA(Gly) + AMP + diphosphate. This chain is Glycine--tRNA ligase alpha subunit, found in Salmonella arizonae (strain ATCC BAA-731 / CDC346-86 / RSK2980).